Consider the following 261-residue polypeptide: 3-methyl-2-oxobutanoate hydroxymethyltransferase (261 aa).

Residues Asp-42 and Asp-81 each contribute to the Mg(2+) site. Residues 42-43, Asp-81, and Lys-110 each bind 3-methyl-2-oxobutanoate; that span reads DS. Glu-112 provides a ligand contact to Mg(2+). The active-site Proton acceptor is the Glu-179.

Belongs to the PanB family. As to quaternary structure, homodecamer; pentamer of dimers. The cofactor is Mg(2+).

The protein localises to the cytoplasm. The catalysed reaction is 3-methyl-2-oxobutanoate + (6R)-5,10-methylene-5,6,7,8-tetrahydrofolate + H2O = 2-dehydropantoate + (6S)-5,6,7,8-tetrahydrofolate. Its pathway is cofactor biosynthesis; (R)-pantothenate biosynthesis; (R)-pantoate from 3-methyl-2-oxobutanoate: step 1/2. Catalyzes the reversible reaction in which hydroxymethyl group from 5,10-methylenetetrahydrofolate is transferred onto alpha-ketoisovalerate to form ketopantoate. The polypeptide is 3-methyl-2-oxobutanoate hydroxymethyltransferase (Thermus thermophilus (strain ATCC BAA-163 / DSM 7039 / HB27)).